A 268-amino-acid polypeptide reads, in one-letter code: Tetraspanin-5 (268 aa).

The Cytoplasmic portion of the chain corresponds to 1-17 (MSGKHYKGPEVSCCIKY). The chain crosses the membrane as a helical span at residues 18–38 (FIFGFNVIFWFLGITFLGIGL). The Extracellular segment spans residues 39–61 (WAWNEKGVLSNISSITDLGGFDP). N49 is a glycosylation site (N-linked (GlcNAc...) asparagine). A helical membrane pass occupies residues 62–82 (VWLFLVVGGVMFILGFAGCIG). Residues 83–92 (ALRENTFLLK) lie on the Cytoplasmic side of the membrane. The chain crosses the membrane as a helical span at residues 93–113 (FFSVFLGIIFFLELTAGVLAF). Residues 114 to 232 (VFKDWIKDQL…PQFEKWLQDN (119 aa)) lie on the Extracellular side of the membrane. Cystine bridges form between C153–C221, C154–C186, C170–C180, and C187–C200. N-linked (GlcNAc...) asparagine glycosylation is found at N169 and N174. N-linked (GlcNAc...) asparagine glycosylation occurs at N232. A helical membrane pass occupies residues 233–253 (LTIVAGIFIGIALLQIFGICL). The Cytoplasmic segment spans residues 254 to 268 (AQNLVSDIEAVRASW).

The protein belongs to the tetraspanin (TM4SF) family. Interacts with ADAM10; the interaction influences ADAM10 substrate specificity, endocytosis and turnover. Palmitoylated.

It is found in the cell membrane. In terms of biological role, part of TspanC8 subgroup, composed of 6 members that interact with the transmembrane metalloprotease ADAM10. This interaction is required for ADAM10 exit from the endoplasmic reticulum and for enzymatic maturation and trafficking to the cell surface as well as substrate specificity. Different TspanC8/ADAM10 complexes have distinct substrates. Promotes ADAM10-mediated cleavage of CD44. Seems to regulate VE-cadherin expression in endothelial cells probably through interaction with ADAM10, promoting leukocyte transmigration. The protein is Tetraspanin-5 of Homo sapiens (Human).